A 451-amino-acid polypeptide reads, in one-letter code: Chromosomal replication initiator protein DnaA (451 aa).

The domain I, interacts with DnaA modulators stretch occupies residues 1 to 73; the sequence is MQDNLPQIWE…SNALKQTTSK (73 aa). The interval 73–113 is domain II; the sequence is KNFEIRFIVPSEEKISKTEESQKKLEGSVNISVASDQFVSN. Residues 114-330 are domain III, AAA+ region; the sequence is NLNPKYTFDT…GALIRIVAYS (217 aa). Residues Gly-158, Gly-160, Lys-161, and Thr-162 each contribute to the ATP site. The interval 331–451 is domain IV, binds dsDNA; the sequence is SLTNSEITVE…ERIAKEIKGD (121 aa).

The protein belongs to the DnaA family. Oligomerizes as a right-handed, spiral filament on DNA at oriC.

The protein resides in the cytoplasm. Plays an essential role in the initiation and regulation of chromosomal replication. ATP-DnaA binds to the origin of replication (oriC) to initiate formation of the DNA replication initiation complex once per cell cycle. Binds the DnaA box (a 9 base pair repeat at the origin) and separates the double-stranded (ds)DNA. Forms a right-handed helical filament on oriC DNA; dsDNA binds to the exterior of the filament while single-stranded (ss)DNA is stabiized in the filament's interior. The ATP-DnaA-oriC complex binds and stabilizes one strand of the AT-rich DNA unwinding element (DUE), permitting loading of DNA polymerase. After initiation quickly degrades to an ADP-DnaA complex that is not apt for DNA replication. Binds acidic phospholipids. This chain is Chromosomal replication initiator protein DnaA, found in Alkaliphilus oremlandii (strain OhILAs) (Clostridium oremlandii (strain OhILAs)).